The sequence spans 264 residues: Teichoic acids export ATP-binding protein TagH (264 aa).

The region spanning 5–243 (VNIKNVTKEY…YEAFLNDFKK (239 aa)) is the ABC transporter domain. 57–64 (GINGSGKS) contributes to the ATP binding site.

Belongs to the ABC transporter superfamily. Teichoic acids exporter (TC 3.A.1.104.1) family. In terms of assembly, the complex is composed of two ATP-binding proteins (TagH) and two transmembrane proteins (TagG).

Its subcellular location is the cell membrane. The enzyme catalyses ATP + H2O + teichoic acidSide 1 = ADP + phosphate + teichoic acidSide 2.. Its function is as follows. Part of the ABC transporter complex TagGH involved in teichoic acids export. Responsible for energy coupling to the transport system. In Staphylococcus aureus (strain USA300), this protein is Teichoic acids export ATP-binding protein TagH.